The following is a 229-amino-acid chain: Germin-like protein 12-2 (229 aa).

The signal sequence occupies residues 1 to 22 (MASSNFFLLTALIALVATQAMA). An intrachain disulfide couples C32 to C47. The 156-residue stretch at 62-217 (ANLDKPMDTT…AFQVDKKAVD (156 aa)) folds into the Cupin type-1 domain. N-linked (GlcNAc...) asparagine glycosylation occurs at N78. Mn(2+)-binding residues include H111, H113, E118, and H162.

The protein belongs to the germin family. In terms of assembly, oligomer (believed to be a pentamer but probably hexamer).

The protein localises to the secreted. It localises to the extracellular space. The protein resides in the apoplast. May play a role in plant defense. Probably has no oxalate oxidase activity even if the active site is conserved. The chain is Germin-like protein 12-2 from Oryza sativa subsp. japonica (Rice).